The primary structure comprises 936 residues: Protein translocase subunit SecA (936 aa).

ATP-binding positions include Gln87, 105 to 109 (GEGKT), and Asp515. Cys920, Cys922, Cys931, and His932 together coordinate Zn(2+).

It belongs to the SecA family. Monomer and homodimer. Part of the essential Sec protein translocation apparatus which comprises SecA, SecYEG and auxiliary proteins SecDF-YajC and YidC. It depends on Zn(2+) as a cofactor.

Its subcellular location is the cell inner membrane. It is found in the cytoplasm. The catalysed reaction is ATP + H2O + cellular proteinSide 1 = ADP + phosphate + cellular proteinSide 2.. Its function is as follows. Part of the Sec protein translocase complex. Interacts with the SecYEG preprotein conducting channel. Has a central role in coupling the hydrolysis of ATP to the transfer of proteins into and across the cell membrane, serving both as a receptor for the preprotein-SecB complex and as an ATP-driven molecular motor driving the stepwise translocation of polypeptide chains across the membrane. This chain is Protein translocase subunit SecA, found in Paraburkholderia xenovorans (strain LB400).